Here is a 94-residue protein sequence, read N- to C-terminus: Ribonuclease P protein component 1 (94 aa).

This sequence belongs to the eukaryotic/archaeal RNase P protein component 1 family. As to quaternary structure, consists of a catalytic RNA component and at least 4-5 protein subunits.

It localises to the cytoplasm. It carries out the reaction Endonucleolytic cleavage of RNA, removing 5'-extranucleotides from tRNA precursor.. Functionally, part of ribonuclease P, a protein complex that generates mature tRNA molecules by cleaving their 5'-ends. The protein is Ribonuclease P protein component 1 of Thermofilum pendens (strain DSM 2475 / Hrk 5).